The sequence spans 52 residues: MGDFGASKTLPKQCSALRKGGHVVMKDRPCKIVEMSTSKTGKHGSAKVHLVG.

Position 42 is a hypusine (lysine 42).

It belongs to the eIF-5A family. In terms of processing, lys-42 undergoes hypusination, a unique post-translational modification that consists in the addition of a butylamino group from spermidine to lysine side chain, leading to the formation of the unusual amino acid hypusine. eIF-5As are the only known proteins to undergo this modification, which is essential for their function.

The protein localises to the cytoplasm. Translation factor that promotes translation elongation and termination, particularly upon ribosome stalling at specific amino acid sequence contexts. Binds between the exit (E) and peptidyl (P) site of the ribosome and promotes rescue of stalled ribosome: specifically required for efficient translation of polyproline-containing peptides as well as other motifs that stall the ribosome. Acts as a ribosome quality control (RQC) cofactor by joining the RQC complex to facilitate peptidyl transfer during CAT tailing step. This Schistosoma mansoni (Blood fluke) protein is Eukaryotic translation initiation factor 5A.